The chain runs to 160 residues: 2-C-methyl-D-erythritol 2,4-cyclodiphosphate synthase (160 aa).

Residues D10 and H12 each coordinate a divalent metal cation. 4-CDP-2-C-methyl-D-erythritol 2-phosphate-binding positions include 10–12 (DVH) and 36–37 (HS). Residue H44 participates in a divalent metal cation binding. Residues 58–60 (DIG), 63–67 (FPDTD), and R144 each bind 4-CDP-2-C-methyl-D-erythritol 2-phosphate.

Belongs to the IspF family. Homotrimer. A divalent metal cation serves as cofactor.

The enzyme catalyses 4-CDP-2-C-methyl-D-erythritol 2-phosphate = 2-C-methyl-D-erythritol 2,4-cyclic diphosphate + CMP. It functions in the pathway isoprenoid biosynthesis; isopentenyl diphosphate biosynthesis via DXP pathway; isopentenyl diphosphate from 1-deoxy-D-xylulose 5-phosphate: step 4/6. Involved in the biosynthesis of isopentenyl diphosphate (IPP) and dimethylallyl diphosphate (DMAPP), two major building blocks of isoprenoid compounds. Catalyzes the conversion of 4-diphosphocytidyl-2-C-methyl-D-erythritol 2-phosphate (CDP-ME2P) to 2-C-methyl-D-erythritol 2,4-cyclodiphosphate (ME-CPP) with a corresponding release of cytidine 5-monophosphate (CMP). This is 2-C-methyl-D-erythritol 2,4-cyclodiphosphate synthase from Dechloromonas aromatica (strain RCB).